The sequence spans 2588 residues: Histone-lysine N-methyltransferase, H3 lysine-36 specific (2588 aa).

2 positions are modified to phosphoserine: serine 110 and serine 118. 2 disordered regions span residues 209 to 264 (GSEQ…LGDT) and 277 to 307 (LSFQ…TSQE). The segment covering 235 to 249 (EKQKNKQRSEVDGSN) has biased composition (basic and acidic residues). The segment covering 298–307 (GTSSPSTSQE) has biased composition (polar residues). Residues serine 380 and serine 383 each carry the phosphoserine modification. Residues 383–403 (SADEKEKPCAKSRVRKSSDNI) form a disordered region. Lysine 802 participates in a covalent cross-link: Glycyl lysine isopeptide (Lys-Gly) (interchain with G-Cter in SUMO2). Disordered regions lie at residues 830 to 899 (ASYR…SDKR), 947 to 987 (ERKR…PGKE), and 1008 to 1133 (FDSK…PRLN). The segment covering 855-874 (GSSTPNSEKPGDSTQDSVHQ) has biased composition (polar residues). Residues 881-895 (SALSGELSSSLSSLA) are compositionally biased toward low complexity. Residues 1008–1033 (FDSKAKQSDPDKNLEKEPSFENRKGP) show a composition bias toward basic and acidic residues. Residues 1054–1073 (PKKRWQRLNQRRPKPGKRAN) are compositionally biased toward basic residues. A Glycyl lysine isopeptide (Lys-Gly) (interchain with G-Cter in SUMO2) cross-link involves residue lysine 1237. The disordered stretch occupies residues 1279-1324 (ASPRPALESEELLVKTPGNYESKRQRKPTKKLLESNDLDPGFMPKK). Serine 1408 bears the Phosphoserine mark. PHD-type zinc fingers lie at residues 1441–1487 (ENVC…CHTG), 1488–1544 (IHTC…CHAA), and 1605–1649 (VSWC…CKAG). The PWWP domain occupies 1654–1716 (YREIVWVKVG…QARVFPYMEG (63 aa)). One can recognise an AWS domain in the interval 1788-1838 (SEIPRCNCKATDENPCGIDSECINRMLLYECHPTVCPAGVRCQNQCFSKRQ). The region spanning 1840–1957 (PDVEIFRTLQ…AGTELTFNYN (118 aa)) is the SET domain. Residues 1850–1852 (RGW), 1892–1895 (TNFY), 1918–1919 (NH), asparagine 1963, and lysine 1969 contribute to the S-adenosyl-L-methionine site. The segment at 1958 to 1964 (LECLGNG) is inhibits enzyme activity in the absence of bound histone. A Post-SET domain is found at 1964–1980 (GKTVCKCGAPNCSGFLG). The interval 1989–2010 (VTEEKSRKFKRKPHGKRRSQGE) is disordered. Residues 1995-2006 (RKFKRKPHGKRR) show a composition bias toward basic residues. Residues 2016–2063 (EDECFSCGDAGQLVSCKKPGCPKVYHADCLNLTKRPAGKWECPWHQCD) form a PHD-type 4; atypical zinc finger. 4 disordered regions span residues 2105–2320 (PCGP…PPPE), 2333–2423 (KEKA…PSEH), 2447–2521 (YESA…WGLG), and 2560–2588 (RGQD…SEKK). Positions 2179-2196 (RPPERTDSSSHLLDRIRD) are enriched in basic and acidic residues. The span at 2201–2212 (GTKSQSLVSSQR) shows a compositional bias: polar residues. A compositionally biased stretch (basic and acidic residues) spans 2213–2223 (PQDRPPAKEGP). Residues 2232–2249 (SPMTRPSSSPSVSSLPLE) are compositionally biased toward low complexity. The span at 2250 to 2261 (RPLRMTDSRLDK) shows a compositional bias: basic and acidic residues. Serine 2267 is subject to Phosphoserine. At threonine 2360 the chain carries Phosphothreonine. Residue serine 2369 is modified to Phosphoserine. Lysine 2509 is covalently cross-linked (Glycyl lysine isopeptide (Lys-Gly) (interchain with G-Cter in SUMO2)).

Belongs to the class V-like SAM-binding methyltransferase superfamily. Interacts with AR DNA- and ligand-binding domains. Interacts with the ligand-binding domains of RARA and THRA in the absence of ligand; in the presence of ligand the interaction is severely disrupted but some binding still occurs. Interacts with the ligand-binding domains of RXRA and ESRRA only in the presence of ligand. Interacts with ZNF496. Expressed in the embryo and the outer region of the uterine decidua at early post-implantation 5.5 dpc stage. Uniformly expressed in embryonic and extraembryonic tissues during gastrulation stage 7.5 dpc. Expressed differentially after stage 14.5 dpc with highest expression in proliferating cells. Enriched in the telencephalic region of the brain, spinal cord, intestinal crypt, tooth buds, thymus and salivary glands at stage 16.5 dpc. Also expressed in the ossification region of developing bones and in the periosteum.

It localises to the nucleus. It is found in the chromosome. The catalysed reaction is L-lysyl(36)-[histone H3] + 2 S-adenosyl-L-methionine = N(6),N(6)-dimethyl-L-lysyl(36)-[histone H3] + 2 S-adenosyl-L-homocysteine + 2 H(+). In terms of biological role, histone methyltransferase that dimethylates Lys-36 of histone H3 (H3K36me2). Transcriptional intermediary factor capable of negatively influencing transcription. May also positively influence transcription. Essential for early post-implantation development. This chain is Histone-lysine N-methyltransferase, H3 lysine-36 specific, found in Mus musculus (Mouse).